The primary structure comprises 425 residues: Serine--tRNA ligase (425 aa).

233–235 (TAE) contacts L-serine. 264 to 266 (RRE) contributes to the ATP binding site. Glutamate 287 is a binding site for L-serine. 351–354 (EISS) contacts ATP. Serine 385 is an L-serine binding site.

This sequence belongs to the class-II aminoacyl-tRNA synthetase family. Type-1 seryl-tRNA synthetase subfamily. As to quaternary structure, homodimer. The tRNA molecule binds across the dimer.

Its subcellular location is the cytoplasm. The enzyme catalyses tRNA(Ser) + L-serine + ATP = L-seryl-tRNA(Ser) + AMP + diphosphate + H(+). The catalysed reaction is tRNA(Sec) + L-serine + ATP = L-seryl-tRNA(Sec) + AMP + diphosphate + H(+). The protein operates within aminoacyl-tRNA biosynthesis; selenocysteinyl-tRNA(Sec) biosynthesis; L-seryl-tRNA(Sec) from L-serine and tRNA(Sec): step 1/1. In terms of biological role, catalyzes the attachment of serine to tRNA(Ser). Is also able to aminoacylate tRNA(Sec) with serine, to form the misacylated tRNA L-seryl-tRNA(Sec), which will be further converted into selenocysteinyl-tRNA(Sec). The chain is Serine--tRNA ligase from Parasynechococcus marenigrum (strain WH8102).